The chain runs to 845 residues: uncharacterized protein (845 aa).

Disordered regions lie at residues 17-37 and 550-573; these read RRKQ…NDQP and AATE…NESL. Residues 622 to 707 are a coiled coil; it reads LSEQRFEREN…ELKKSNEHTR (86 aa).

This is an uncharacterized protein from Saccharum officinarum (Sugarcane).